Reading from the N-terminus, the 165-residue chain is Type 3 secretion system regulator YopR (165 aa).

It belongs to the YopR family.

The protein localises to the secreted. In terms of biological role, may be involved in the regulation of the assembly of the type III secretion system (T3SS), also called injectisome, which is used to inject bacterial effector proteins into eukaryotic host cells. May control the secretion and/or polymerization of YscF/SctF, the principal component of the needle filament, thereby impacting the assembly of the T3SS. Involved in pathogenesis. The chain is Type 3 secretion system regulator YopR from Yersinia pestis.